The sequence spans 509 residues: MFS transporter fsdG (509 aa).

N8 and N26 each carry an N-linked (GlcNAc...) asparagine glycan. Transmembrane regions (helical) follow at residues 63-83 (FLIH…ATTM), 103-123 (IALT…VTSP), 139-159 (IFFL…MFIA), and 162-182 (FLAG…IADF). A glycan (N-linked (GlcNAc...) asparagine) is linked at N189. The next 4 membrane-spanning stretches (helical) occupy residues 195–215 (LFAL…GFVA), 222–242 (WTFR…CIFL), 298–318 (LIFL…FGLI), and 341–361 (GLSY…FNFI). N367 carries N-linked (GlcNAc...) asparagine glycosylation. Transmembrane regions (helical) follow at residues 380–400 (YLPL…WYGW), 408–428 (WVVP…IIMP), 442–462 (AASV…FLPL), and 474–494 (GWGN…PAIF).

It belongs to the major facilitator superfamily.

The protein localises to the cell membrane. Functionally, efflux pump that might be required for efficient secretion of fusaridione A or other secondary metabolies produced by the fusaridione A gene cluster. The chain is MFS transporter fsdG from Fusarium heterosporum.